The chain runs to 83 residues: Turripeptide Lol11.2 (83 aa).

The signal sequence occupies residues 1–27 (MARLMMTVGCLIFIVVLLDMMVPVSNT).

This sequence belongs to the conopeptide I2-like superfamily. Contains 4 disulfide bonds. Expressed by the venom duct.

The protein resides in the secreted. Its function is as follows. Acts as a neurotoxin by inhibiting voltage-gated potassium channels (Kv). The sequence is that of Turripeptide Lol11.2 from Iotyrris olangoensis (Sea snail).